Consider the following 150-residue polypeptide: UPF0735 ACT domain-containing protein DSY2247 (150 aa).

The region spanning 74–149 (TFSLTLENTA…GVRKIEVIGQ (76 aa)) is the ACT domain.

It belongs to the UPF0735 family.

In Desulfitobacterium hafniense (strain Y51), this protein is UPF0735 ACT domain-containing protein DSY2247.